The following is a 1187-amino-acid chain: DNA-directed RNA polymerase subunit beta (1187 aa).

It belongs to the RNA polymerase beta chain family. In terms of assembly, the RNAP catalytic core consists of 2 alpha, 1 beta, 1 beta' and 1 omega subunit. When a sigma factor is associated with the core the holoenzyme is formed, which can initiate transcription.

It catalyses the reaction RNA(n) + a ribonucleoside 5'-triphosphate = RNA(n+1) + diphosphate. Functionally, DNA-dependent RNA polymerase catalyzes the transcription of DNA into RNA using the four ribonucleoside triphosphates as substrates. This is DNA-directed RNA polymerase subunit beta from Streptococcus mutans serotype c (strain ATCC 700610 / UA159).